Here is a 32-residue protein sequence, read N- to C-terminus: Calichemicin antitumor antibiotic biosynthesis protein (32 aa).

The polypeptide is Calichemicin antitumor antibiotic biosynthesis protein (Micromonospora echinospora (Micromonospora purpurea)).